A 741-amino-acid polypeptide reads, in one-letter code: Ethylene receptor (741 aa).

3 helical membrane passes run 23-43 (ISDF…IYFV), 53-73 (WVLV…LINL), and 92-112 (VLTA…IPDL). Residues Cys-65 and His-69 each coordinate Cu cation. The 150-residue stretch at 158 to 307 (DRHTILKTTL…VVADQVAVAL (150 aa)) folds into the GAF domain. Positions 350–589 (VMNHEMRTPM…TFIVKLGFPE (240 aa)) constitute a Histidine kinase domain. His-353 bears the Phosphohistidine; by autocatalysis mark. In terms of domain architecture, Response regulatory spans 615–732 (KVLVMDDNGV…KMRSVLSELL (118 aa)). A 4-aspartylphosphate modification is found at Asp-663.

This sequence belongs to the ethylene receptor family. In terms of assembly, homodimer; disulfide-linked. The cofactor is Cu cation. Activation probably requires a transfer of a phosphate group between a His in the transmitter domain and an Asp of the receiver domain.

Its subcellular location is the endoplasmic reticulum membrane. It carries out the reaction ATP + protein L-histidine = ADP + protein N-phospho-L-histidine.. Its function is as follows. May act early in the ethylene signal transduction pathway, possibly as an ethylene receptor, or as a regulator of the pathway. The chain is Ethylene receptor (ETR1) from Malus domestica (Apple).